The sequence spans 526 residues: Beta,beta-carotene 15,15'-dioxygenase (526 aa).

Fe cation contacts are provided by His172, His236, His307, and His512.

The protein belongs to the carotenoid oxygenase family. Fe(2+) is required as a cofactor.

Its subcellular location is the cytoplasm. It is found in the cytosol. The enzyme catalyses all-trans-beta-carotene + O2 = 2 all-trans-retinal. It functions in the pathway cofactor metabolism; retinol metabolism. Functionally, symmetrically cleaves beta-carotene into two molecules of retinal using a dioxygenase mechanism. The chain is Beta,beta-carotene 15,15'-dioxygenase from Gallus gallus (Chicken).